We begin with the raw amino-acid sequence, 1322 residues long: Phosphoribosylformylglycinamidine synthase (1322 aa).

ATP contacts are provided by residues 307 to 318 (GASTGSGGEIRD) and alanine 678. Mg(2+) is bound by residues glutamate 718, asparagine 722, and aspartate 886. In terms of domain architecture, Glutamine amidotransferase type-1 spans 1069 to 1322 (MAILREQGVN…MFRNARVNLG (254 aa)). Cysteine 1162 (nucleophile) is an active-site residue. Active-site residues include histidine 1287 and glutamate 1289.

It in the N-terminal section; belongs to the FGAMS family. As to quaternary structure, monomer.

Its subcellular location is the cytoplasm. It catalyses the reaction N(2)-formyl-N(1)-(5-phospho-beta-D-ribosyl)glycinamide + L-glutamine + ATP + H2O = 2-formamido-N(1)-(5-O-phospho-beta-D-ribosyl)acetamidine + L-glutamate + ADP + phosphate + H(+). It participates in purine metabolism; IMP biosynthesis via de novo pathway; 5-amino-1-(5-phospho-D-ribosyl)imidazole from N(2)-formyl-N(1)-(5-phospho-D-ribosyl)glycinamide: step 1/2. Its function is as follows. Phosphoribosylformylglycinamidine synthase involved in the purines biosynthetic pathway. Catalyzes the ATP-dependent conversion of formylglycinamide ribonucleotide (FGAR) and glutamine to yield formylglycinamidine ribonucleotide (FGAM) and glutamate. The chain is Phosphoribosylformylglycinamidine synthase from Photobacterium profundum (strain SS9).